The following is a 229-amino-acid chain: Lytic polysaccharide monooxygenase-like protein ham-7 (229 aa).

The signal sequence occupies residues 1–17; that stretch reads MLTSTLLALASAALASA. Histidine 18 serves as a coordination point for Cu(2+). Intrachain disulfides connect cysteine 47–cysteine 157 and cysteine 122–cysteine 178. N-linked (GlcNAc...) asparagine glycosylation is found at asparagine 55, asparagine 98, asparagine 139, asparagine 174, and asparagine 180. Serine 206 is lipidated: GPI-anchor amidated serine. The propeptide at 207–229 is removed in mature form; that stretch reads AAASLARMAGWVPLVAGGLWLML.

This sequence belongs to the X325 family. It depends on Cu(2+) as a cofactor.

It localises to the cell membrane. Lytic polysaccharide monooxygenase-like protein that has diverged to biological functions other than polysaccharide degradation since it does not perform oxidative cleavage of polysaccharides. Acts as the major cell wall sensor that regulates MAK-1-dependent hyphal anastomosis, the fusion of hyphal cells. May also act as a cell surface-bound protein that functions in the copper-accumulation pathway. The protein is Lytic polysaccharide monooxygenase-like protein ham-7 of Neurospora crassa (strain ATCC 24698 / 74-OR23-1A / CBS 708.71 / DSM 1257 / FGSC 987).